A 358-amino-acid polypeptide reads, in one-letter code: Molybdenum import ATP-binding protein ModC (358 aa).

In terms of domain architecture, ABC transporter spans N2–E234. G34–T41 provides a ligand contact to ATP. Positions L293–D358 constitute a Mop domain.

This sequence belongs to the ABC transporter superfamily. Molybdate importer (TC 3.A.1.8) family. The complex is composed of two ATP-binding proteins (ModC), two transmembrane proteins (ModB) and a solute-binding protein (ModA).

It is found in the cell inner membrane. The enzyme catalyses molybdate(out) + ATP + H2O = molybdate(in) + ADP + phosphate + H(+). Its function is as follows. Part of the ABC transporter complex ModABC involved in molybdenum import. Responsible for energy coupling to the transport system. This chain is Molybdenum import ATP-binding protein ModC, found in Hahella chejuensis (strain KCTC 2396).